We begin with the raw amino-acid sequence, 794 residues long: Zinc finger protein 148 (794 aa).

Lysine 6 participates in a covalent cross-link: Glycyl lysine isopeptide (Lys-Gly) (interchain with G-Cter in SUMO2). Position 51 is a phosphoserine (serine 51). Glycyl lysine isopeptide (Lys-Gly) (interchain with G-Cter in SUMO2) cross-links involve residues lysine 88, lysine 115, and lysine 132. The C2H2-type 1 zinc finger occupies histidine 171 to histidine 193. Position 194 is a phosphothreonine (threonine 194). C2H2-type zinc fingers lie at residues phenylalanine 199–histidine 221 and phenylalanine 227–histidine 249. Residue serine 250 is modified to Phosphoserine. A C2H2-type 4 zinc finger spans residues tyrosine 255 to histidine 278. A Glycyl lysine isopeptide (Lys-Gly) (interchain with G-Cter in SUMO2) cross-link involves residue lysine 291. Positions glutamate 298 to serine 336 are disordered. A phosphoserine mark is found at serine 301 and serine 306. Lysine 308 participates in a covalent cross-link: Glycyl lysine isopeptide (Lys-Gly) (interchain with G-Cter in SUMO2). The span at glutamate 321 to serine 336 shows a compositional bias: basic and acidic residues. A Glycyl lysine isopeptide (Lys-Gly) (interchain with G-Cter in SUMO1); alternate cross-link involves residue lysine 356. Residue lysine 356 forms a Glycyl lysine isopeptide (Lys-Gly) (interchain with G-Cter in SUMO2); alternate linkage. Lysine 402 is covalently cross-linked (Glycyl lysine isopeptide (Lys-Gly) (interchain with G-Cter in SUMO2)). Position 412 is a phosphoserine (serine 412). Glycyl lysine isopeptide (Lys-Gly) (interchain with G-Cter in SUMO2) cross-links involve residues lysine 421 and lysine 424. Residues asparagine 574–glycine 588 are compositionally biased toward polar residues. The tract at residues asparagine 574–serine 596 is disordered. Lysine 607 is modified (N6-acetyllysine). Serine 665 and serine 784 each carry phosphoserine.

Belongs to the krueppel C2H2-type zinc-finger protein family. As to quaternary structure, interacts with HNRNPDL. Interacts with the 5FMC complex; the interaction requires association with CHTOP. Interacts with CAVIN1. In terms of processing, sumoylated with SUMO2. Desumoylated by SENP3, resulting in the stimulation of transcription of its target genes.

It is found in the nucleus. Functionally, involved in transcriptional regulation. Represses the transcription of a number of genes including gastrin, stromelysin and enolase. Binds to the G-rich box in the enhancer region of these genes. The chain is Zinc finger protein 148 (ZNF148) from Homo sapiens (Human).